The primary structure comprises 467 residues: MGTTLAEKVWADHLVRKGSDGAPDLLYIDLMLMHEVTSPQAFEGLRLAGRKPRHVDQLIATEDHNTPTVDIDRPNPDETSALQLTTLEKNCKEFGVRLHPLGDADQGIVHAFAPILGLTQPGMTIVCGDSHTSTHGAFGALAFGIGTSEVEHVMATQTLSLKPFKTMAVNVNGKLPADATAKDIILAIIAKIGTGGGQGYVIEYRGEAIRNLTMDERMTVCNMSIEAGARAGMIAPDETTFEYLKGRPHAPEGELWDQAVAYWKTLKTDDDAVFDKVVDIDATKLGPYVTWGTNPGQGLPITASVPEPGKIADATKRAAAERAITYMGLKPGMPIKDIAVDTVFIGSCTNGRIDDLRQAAAIMKGHRKAENIHRVLVVPASSRVRLQAEKEGLDKVFKDFGAEWRNAGCSMCLGMNPDKLVPNERSISTSNRNFEGRQGKGSRTHLASPAVAAATAIRGTISSPADL.

Residues Cys348, Cys409, and Cys412 each coordinate [4Fe-4S] cluster. A disordered region spans residues 423 to 448 (NERSISTSNRNFEGRQGKGSRTHLAS).

Belongs to the aconitase/IPM isomerase family. LeuC type 1 subfamily. Heterodimer of LeuC and LeuD. The cofactor is [4Fe-4S] cluster.

It carries out the reaction (2R,3S)-3-isopropylmalate = (2S)-2-isopropylmalate. The protein operates within amino-acid biosynthesis; L-leucine biosynthesis; L-leucine from 3-methyl-2-oxobutanoate: step 2/4. Functionally, catalyzes the isomerization between 2-isopropylmalate and 3-isopropylmalate, via the formation of 2-isopropylmaleate. The polypeptide is 3-isopropylmalate dehydratase large subunit (Bifidobacterium longum (strain DJO10A)).